The sequence spans 525 residues: Cytochrome P450 CYP72A613 (525 aa).

A helical transmembrane segment spans residues 2–22; sequence VFLFPTGTIIIWVLTILLAVI. C473 lines the heme pocket.

This sequence belongs to the cytochrome P450 family. Mainly expressed in leaves and seed pods and, to a lower extent, in flowers and stems.

The protein resides in the membrane. Its pathway is steroid metabolism; cholesterol metabolism. Its function is as follows. Involved in the biosynthesis of spiroketal steroid and saponin natural products from cholesterol such as diosgenin and analogs (e.g. furostanol and spirostanol), plant defense compounds used as main precursors for the industrial production of steroid hormones. During the 5,6-spiroketalization of cholesterol, may catalyze the 27-monohydroxylation of furostanol-type steroid to an intermediate product that undergoes a stereospecific formation of the terminal heterocycle to yield diosgenin. This Trigonella foenum-graecum (Fenugreek) protein is Cytochrome P450 CYP72A613.